The chain runs to 534 residues: CTP synthase (534 aa).

Residues 1-265 (MKYIVVTGGV…TTRLMKHLKL (265 aa)) form an amidoligase domain region. CTP is bound at residue Ser12. Ser12 contributes to the UTP binding site. An ATP-binding site is contributed by 13–18 (GLGKGI). L-glutamine is bound at residue Tyr53. Residue Asp70 coordinates ATP. The Mg(2+) site is built by Asp70 and Glu140. CTP-binding positions include 147–149 (DIE), 186–191 (KTKPSQ), and Lys222. UTP-binding positions include 186–191 (KTKPSQ) and Lys222. The region spanning 289-530 (KLAIVGKYTN…VRAMCKYNKE (242 aa)) is the Glutamine amidotransferase type-1 domain. Residue Gly352 coordinates L-glutamine. Cys379 acts as the Nucleophile; for glutamine hydrolysis in catalysis. Residues 380 to 383 (LGMQ), Glu403, and Arg460 contribute to the L-glutamine site. Active-site residues include His503 and Glu505.

The protein belongs to the CTP synthase family. In terms of assembly, homotetramer.

The catalysed reaction is UTP + L-glutamine + ATP + H2O = CTP + L-glutamate + ADP + phosphate + 2 H(+). It carries out the reaction L-glutamine + H2O = L-glutamate + NH4(+). The enzyme catalyses UTP + NH4(+) + ATP = CTP + ADP + phosphate + 2 H(+). The protein operates within pyrimidine metabolism; CTP biosynthesis via de novo pathway; CTP from UDP: step 2/2. Its activity is regulated as follows. Allosterically activated by GTP, when glutamine is the substrate; GTP has no effect on the reaction when ammonia is the substrate. The allosteric effector GTP functions by stabilizing the protein conformation that binds the tetrahedral intermediate(s) formed during glutamine hydrolysis. Inhibited by the product CTP, via allosteric rather than competitive inhibition. Its function is as follows. Catalyzes the ATP-dependent amination of UTP to CTP with either L-glutamine or ammonia as the source of nitrogen. Regulates intracellular CTP levels through interactions with the four ribonucleotide triphosphates. This is CTP synthase from Methanosarcina acetivorans (strain ATCC 35395 / DSM 2834 / JCM 12185 / C2A).